We begin with the raw amino-acid sequence, 253 residues long: MATIKEIKAILETIVDLKDKRWQEYQTDSRAGVQKAILQRKKNIQSDLDEEARLEQMLVYEKKLYIEHINLIAGIDEVGRGPLAGPVVAAAVILPPNCKIKHLNDSKKIPKKKHQEIYQNILDQALAVGIGIQDSQCIDDINIYEATKHAMIDAVSHLSVAPEHLLIDAMVLDLSIPQTKIIKGDANSLSIAAASIVAKVTRDKIMSDYDSTYPGYAFSKNAGYGTKEHLEGLQKYGITPIHRKSFEPIKSML.

The RNase H type-2 domain maps to 70-253 (NLIAGIDEVG…KSFEPIKSML (184 aa)). Residues D76, E77, and D168 each coordinate a divalent metal cation.

This sequence belongs to the RNase HII family. Mn(2+) serves as cofactor. Requires Mg(2+) as cofactor.

The protein localises to the cytoplasm. The catalysed reaction is Endonucleolytic cleavage to 5'-phosphomonoester.. Functionally, endonuclease that specifically degrades the RNA of RNA-DNA hybrids. The sequence is that of Ribonuclease HII from Streptococcus agalactiae serotype III (strain NEM316).